The sequence spans 444 residues: N-succinylarginine dihydrolase (444 aa).

Residues 19-28 (SGLSVGNIAS), asparagine 110, and 137-138 (HR) each bind substrate. Residue glutamate 174 is part of the active site. Arginine 214 contacts substrate. Residue histidine 250 is part of the active site. Substrate contacts are provided by aspartate 252 and asparagine 362. The Nucleophile role is filled by cysteine 368.

This sequence belongs to the succinylarginine dihydrolase family. As to quaternary structure, homodimer.

The catalysed reaction is N(2)-succinyl-L-arginine + 2 H2O + 2 H(+) = N(2)-succinyl-L-ornithine + 2 NH4(+) + CO2. Its pathway is amino-acid degradation; L-arginine degradation via AST pathway; L-glutamate and succinate from L-arginine: step 2/5. In terms of biological role, catalyzes the hydrolysis of N(2)-succinylarginine into N(2)-succinylornithine, ammonia and CO(2). This chain is N-succinylarginine dihydrolase, found in Aliivibrio fischeri (strain MJ11) (Vibrio fischeri).